The sequence spans 522 residues: Coiled-coil domain-containing protein 149-B (522 aa).

Coiled coils occupy residues 1–196 (MANQ…LESK) and 260–287 (IRHQ…LEVS). Positions 413–522 (ACTAERSEQH…TSPHQECPSS (110 aa)) are disordered. 3 stretches are compositionally biased toward polar residues: residues 429-438 (GGHQSMSTEA), 467-490 (QPVT…TAEQ), and 503-522 (ASLN…CPSS).

This sequence belongs to the CCDC149 family.

The protein is Coiled-coil domain-containing protein 149-B (ccdc149b) of Danio rerio (Zebrafish).